Reading from the N-terminus, the 558-residue chain is MVVDTTAAIKRALSECTGLAEIPLVDGGEHADLATTVAFALAKTKKQAPVKIAQDVVAALKNNRELSDLGVTVEAKGPYINFVFGSAYVTAALKAAVQPGYGSFPAKESPRIVLEHTSANPNGPLHVGHIRNSIIGDSLARAFRKAGYPLEVEYYVNDMGRQIAIVTWGFDHLEHGQHESEKEDAHIARVYIAANREIEKDPGITKQVDKLMELVESGDPETVKKFRREVSRCLDGFAVTLKNLNVKHDRFVWESDFVKNGDTKAVIAKIENLPQATHEGTLLALDLAEFGFTNKYVMRRSDGTSVYAARDLAFHTWKNQNFDRAIDVLGADHKLIGAQLQCTMQLLGEKAPEIVHFEFVSLPEGSMSTRAGKFVSADELIDEVTKRAFDEVTTRRPELDEATRRNIADSVARAGIRYDIVKISPEKSTVFDWKQALDFERQSGPYIQYAHARACSILEKAGAFEECYDLATEQEIILAKKIAKFPSVIEKVVTELRPHLLATYAHELADTFNTFYHYEPVLKSEGEVRDRRLTLVKAVQNTLQESLETLGIDAIHTM.

Positions 119 to 129 match the 'HIGH' region motif; that stretch reads ANPNGPLHVGH.

This sequence belongs to the class-I aminoacyl-tRNA synthetase family.

The protein localises to the cytoplasm. The catalysed reaction is tRNA(Arg) + L-arginine + ATP = L-arginyl-tRNA(Arg) + AMP + diphosphate. This chain is Arginine--tRNA ligase, found in Methanoregula boonei (strain DSM 21154 / JCM 14090 / 6A8).